Reading from the N-terminus, the 221-residue chain is Small ribosomal subunit protein uS3c (221 aa).

Positions 43–121 constitute a KH type-2 domain; the sequence is IQNYIQKNMR…KLKIAITKIA (79 aa).

This sequence belongs to the universal ribosomal protein uS3 family. As to quaternary structure, part of the 30S ribosomal subunit.

The protein resides in the plastid. The protein localises to the chloroplast. This chain is Small ribosomal subunit protein uS3c (rps3), found in Jasminum nudiflorum (Winter jasmine).